The chain runs to 94 residues: Venom peptide SjAPI (94 aa).

Positions 1–24 are cleaved as a signal peptide; sequence MKWGALLCIFGFLAFCSVLDRGLG. The propeptide occupies 25 to 30; the sequence is WIPDIW. 5 disulfide bridges follow: Cys-33/Cys-70, Cys-43/Cys-66, Cys-47/Cys-62, Cys-51/Cys-92, and Cys-72/Cys-86. The 60-residue stretch at 33 to 92 folds into the TIL domain; that stretch reads CSSKNEEFQQCGSSCPETCANHKNPEPKSCAAVCFVGCVCKPGFIRDDLKGSICVKPEDC. The interval 63-65 is protease binding loop; that stretch reads AAV.

Belongs to the serine protease inhibitor-like (TIL domain-containing) family. Expressed by the venom gland.

It is found in the secreted. Its function is as follows. Recombinant protein inhibits both alpha-chymotrypsin (Ki=97.1 nM) and elastase (Ki=3700 nM). The protein is Venom peptide SjAPI of Scorpiops jendeki (Scorpion).